The sequence spans 2551 residues: MVFSYACMVLQRIVVPAVLVLAALMRPVGISFVYLLMFFVSPFVPLATRRNFKGSVTAFFIILLTLSTLVLLGHITLQILAVSLTLPIYNCSFSERLLRHIGFVSFIDLQPFAIIEWLVPEVLVFATSLGSYLTVKRVASQPVGAEQLENGEVVDGQAENAQTSSQPSAADANGGDVQQATVTTPLQQQQQQLRKRVSMISQHIHFEGLVKISPLFCLATLFFAAVLRPSVPGGFYFLIFLLSGTYWATCQTLQRGFALLLRCVMVVLVLHSLSIVSYQTPWMQSHLNHTTLTARLIGLEPLIESYCSPDIRVFLYNNKLSLDSYLNPFALFFAYFALALTTKHLIKPRLVRQSTRKARTPQPLESGSSVAPSVTQRGNDMQLESMEQRSEQENTTTSILDQISYGFVSVGGFIYQNSYIFTNILMMAWSIVYHSWLTFVLLLSANVLWMIPNQRKAMMRSSPFIVLYAEALLIAQYIYGMDLNNEELPTSVPTAGINLQQIGFERPIENQMRPCVPLIVKTAFVLMFWVTSRQFFKEKRDRRRDSTLADFIAPLQITVGSAGSSYLINDGKKTSKFLKKAGDVIKNLLVRLWIWLLVLVIFLCAITGENMTGFRICYMALFLFFLLVFQSSSKAWVKIMYGFWLFLIFYAMSILILIYTYQFDKFDTYWSDYLNVSATLQKDIGLKRYQTKDLFLHLVSPTIIVILTVIQVHYFHKRFIASLQQQPLAGGSAQQKPTETTALEPAPSKRRGSAGSLRKSQGPSAEAAPGATTDFETSVRDLVRISFRKIKNKSEYIFKNFKDVFWRFLELHIMKAVYIAAFVCSVSEVCVLHIIFVGFCVLGATSRKAVQVVISRLISFIVTVIVLSKMIYQIEYLSHSQHNVVCSDNRTANNAEWIGLTKADKVTGGLMSLLRTYIIYMVIVTMHAVISLRQLQMRVKIGALNAPPTKLLFPNIIRADAEKDLVGLVKYLLNFGFYKFGIEISLIALVSTITYRQDIVAVVYALWLVVLLLLRRSQCAKIWGVFQAFFAISILTQYIVLVGLPPSSCLVFPWDEGPFGEGIQRWAMLPGALHFNHVPKLIFDFIVLVILNRQKSIFCIEQRYASNDDYPGGSNRSVIADIAQLGRVPFDNPTHDFCSYIRNYSDILKNGVLCGFYWFTLAVVFLAGTNIADLLALGYLIGAFIFLWQGSDFYLRPIHTIIFRWKWLLAFNVANILIKTSFQMAGCLFMTQLTKDCCWLVHMLGITCTSNVLTEQIMLPEEAELALKPGECPKITHQVVLLWDTICFAFIIFQLRIFKSHYFCHIITDTKANNILASRGADIIESLRHKQIAHRHDHEKQVLHKIKRKMERIRATQQKMLRPLDKQTHFDEHGYPLPAPTVRRRKEIKLHPHATRAGDYYMFEEMDDKFELDLIHDEIDFLEEENITESEMKMQRRKTLYDKSKDAPTGEFPSTSKGISKERDAATASSSASPAPTRDVGDLPVIPPPSTGLGREQTSKETSDSKSKMEVDSGEVTAKDSDEDFDTNPIIRLLEGFLVTLTIRLNRFSRNYRFVNRILAGEKKTLKESSSLNRLGLSSAAAMFHFLKSNLESDESEPPASSSTPRRVVIAPPNATEHSDPTSTTLNTNTTTTPLSPPEPLQPLQPLQPNTTSTPQQQHQHIRAAEEIIELPVDTVDGVAHRKQSINSSPPAKGAGEFNLEEENFAQRDHHIIVEVLISSWYALLANTDLICYIVVFINQVVNASLISLPLPIMVFLWGTLSLPRPTKTFWVTLIAYTQAIVLIKCIFQFKLIWSNYHQLPNQPLTPAKIFGVENKAHYAIYDLILLLVLFLHRYLLKSQGLWKSGYKDTDNQFTKPTASIDERDDSDNLSQPDSRQLNDDAAQKLSLQVSQASLPGSPEFSKTGINQLERTKYTSSLYKFFFSLVHKSRLATDVYALMFLCDFVNFFVLLFGFTAFGTQQTESDEGVQTYLAENKVPIPFLIMLLVQFLLIVIDRALYLRKALVNKIIFHFFSVIGIHIWMFFVVPAVTERTFNSLAPPIIFYVIKCFYMLLSSYQIKSGYPKRILGNFFTKGFSMVNMIAFKVYMQIPFLYELRTILDWVCIDSTMTIFDWLKMEDIFSNIYLIRCTRQSETDFPAMRAQKKASLSKLIMGGTIVLLIVICIWGPLCLFALGNAVGTSNVPFHVSLSIRIGPYDPIYTTNNYDSIFEINPEMYSQMTNAYIKEKQALTFIAGYDATDVAAVRLAGNSPSLWNIAPPDRQRLLNDLRNNHTLKARFSYSLTRKAPAKGLKENVGDEHAISLDESFEGRAALIHMLSETHDVEPIYSNGTTNGTTPEVEEVVVIPGMIPKFIKVLNSGDAAVVSVLSPKHYDYRPLVIKMHRDNETNGLWWEIRDYCNDTFYNETLSKFAYSNCTSGIVMYTFNDKKFPSTFSFLTAGGIIGLYTTFVLLASRFMKSFIGGQNRKIMFEDLPYVDRVLQLCLDIYLVREALEFALEEDLFAKLLFLYRSPETLIKWTRPKEEYVDDDGDTDSIPSRMSVRRPEQLQPQQPQ.

Transmembrane regions (helical) follow at residues 5–25, 27–47, 56–76, 106–126, 204–226, 231–250, 256–276, and 320–340; these read YACMVLQRIVVPAVLVLAALM, PVGISFVYLLMFFVSPFVPLA, VTAFFIILLTLSTLVLLGHIT, FIDLQPFAIIEWLVPEVLVFA, IHFEGLVKISPLFCLATLFFAAV, VPGGFYFLIFLLSGTYWATC, GFALLLRCVMVVLVLHSLSIV, and LSLDSYLNPFALFFAYFALAL. The tract at residues 354-375 is disordered; sequence STRKARTPQPLESGSSVAPSVT. Residues 363–375 show a composition bias toward polar residues; the sequence is PLESGSSVAPSVT. The next 9 helical transmembrane spans lie at 395-415, 424-444, 463-483, 516-536, 548-568, 588-608, 611-631, 639-659, and 695-715; these read TTTSILDQISYGFVSVGGFIY, ILMMAWSIVYHSWLTFVLLLS, PFIVLYAEALLIAQYIYGMDL, VPLIVKTAFVLMFWVTSRQFF, LADFIAPLQITVGSAGSSYLI, LLVRLWIWLLVLVIFLCAITG, MTGFRICYMALFLFFLLVFQS, IMYGFWLFLIFYAMSILILIY, and FLHLVSPTIIVILTVIQVHYF. Over residues 731-741 the composition is skewed to polar residues; sequence GSAQQKPTETT. The tract at residues 731–772 is disordered; it reads GSAQQKPTETTALEPAPSKRRGSAGSLRKSQGPSAEAAPGAT. 12 consecutive transmembrane segments (helical) span residues 819-839, 857-877, 910-930, 973-993, 994-1014, 1022-1042, 1071-1091, 1152-1172, 1174-1194, 1198-1218, 1239-1259, and 1275-1295; these read IAAFVCSVSEVCVLHIIFVGF, LISFIVTVIVLSKMIYQIEYL, LMSLLRTYIIYMVIVTMHAVI, LNFGFYKFGIEISLIALVSTI, TYRQDIVAVVYALWLVVLLLL, IWGVFQAFFAISILTQYIVLV, GALHFNHVPKLIFDFIVLVIL, VLCGFYWFTLAVVFLAGTNIA, LLALGYLIGAFIFLWQGSDFY, IHTIIFRWKWLLAFNVANILI, WLVHMLGITCTSNVLTEQIML, and ITHQVVLLWDTICFAFIIFQL. Disordered stretches follow at residues 1426-1521 and 1592-1658; these read NITE…AKDS and ESDE…PQQQ. Residues 1430-1448 are compositionally biased toward basic and acidic residues; the sequence is SEMKMQRRKTLYDKSKDAP. The segment covering 1466 to 1477 has biased composition (low complexity); that stretch reads ATASSSASPAPT. Positions 1497 to 1511 are enriched in basic and acidic residues; the sequence is QTSKETSDSKSKMEV. Composition is skewed to low complexity over residues 1621 to 1634 and 1644 to 1658; these read PTSTTLNTNTTTTP and LQPLQPNTTSTPQQQ. 4 consecutive transmembrane segments (helical) span residues 1718-1738, 1741-1761, 1770-1790, and 1817-1837; these read ISSWYALLANTDLICYIVVFI, VVNASLISLPLPIMVFLWGTL, FWVTLIAYTQAIVLIKCIFQF, and AHYAIYDLILLLVLFLHRYLL. Residues 1854-1876 are disordered; that stretch reads FTKPTASIDERDDSDNLSQPDSR. 7 helical membrane-spanning segments follow: residues 1937–1957, 1979–1999, 2008–2028, 2033–2053, 2075–2095, 2151–2171, and 2431–2451; these read ALMFLCDFVNFFVLLFGFTAF, IPFLIMLLVQFLLIVIDRALY, IIFHFFSVIGIHIWMFFVVPA, TFNSLAPPIIFYVIKCFYMLL, FSMVNMIAFKVYMQIPFLYEL, IMGGTIVLLIVICIWGPLCLF, and TFSFLTAGGIIGLYTTFVLLA. The tract at residues 2522 to 2551 is disordered; it reads EYVDDDGDTDSIPSRMSVRRPEQLQPQQPQ.

It belongs to the PIEZO (TC 1.A.75) family.

It is found in the cell membrane. Its function is as follows. Component of a mechanosensitive channel required for rapidly adapting mechanically activated (MA) currents. Plays a major role in nociception (response to strong or painful touch). Required for maintaining the mechanosensitivity of tarsal bristle mechanosensors. During their evalulation of potential egg-laying sites, females determine the softest substrate for their eggs first by making a coarse evaluation of substrate hardness using mechanosensitive channels nan and Piezo in the leg tarsal bristles, followed by a much finer assessment using nan, iav and Tmc mechanosensitive channels on the labellum. Acts in the nompC- and nan-expressing neurons of the female leg tarsals, to sense the mild differences in egg-laying substrate stiffness. The polypeptide is Piezo-type mechanosensitive ion channel component (Drosophila melanogaster (Fruit fly)).